Consider the following 277-residue polypeptide: uncharacterized protein (277 aa).

The signal sequence occupies residues 1-25 (MNKKSIWSKTAFGSLFLLLGTAFTA). A lipid anchor (N-palmitoyl cysteine) is attached at C26. A lipid anchor (S-diacylglycerol cysteine) is attached at C26.

It belongs to the MG439/MG440 family.

Its subcellular location is the cell membrane. This is an uncharacterized protein from Mycoplasma pneumoniae (strain ATCC 29342 / M129 / Subtype 1) (Mycoplasmoides pneumoniae).